The following is a 243-amino-acid chain: Small ribosomal subunit protein eS4 (243 aa).

The region spanning 43–105 (IPLLYIVRDY…TGEHYRVLPN (63 aa)) is the S4 RNA-binding domain.

This sequence belongs to the eukaryotic ribosomal protein eS4 family.

This chain is Small ribosomal subunit protein eS4 (rps4e), found in Pyrococcus abyssi (strain GE5 / Orsay).